A 143-amino-acid chain; its full sequence is Aspartate 1-decarboxylase (143 aa).

The Schiff-base intermediate with substrate; via pyruvic acid role is filled by Ser-25. Ser-25 bears the Pyruvic acid (Ser) mark. Residue Thr-57 coordinates substrate. Tyr-58 acts as the Proton donor in catalysis. 73–75 (GAA) contacts substrate.

Belongs to the PanD family. Heterooctamer of four alpha and four beta subunits. Pyruvate is required as a cofactor. Is synthesized initially as an inactive proenzyme, which is activated by self-cleavage at a specific serine bond to produce a beta-subunit with a hydroxyl group at its C-terminus and an alpha-subunit with a pyruvoyl group at its N-terminus.

Its subcellular location is the cytoplasm. The enzyme catalyses L-aspartate + H(+) = beta-alanine + CO2. The protein operates within cofactor biosynthesis; (R)-pantothenate biosynthesis; beta-alanine from L-aspartate: step 1/1. Catalyzes the pyruvoyl-dependent decarboxylation of aspartate to produce beta-alanine. This is Aspartate 1-decarboxylase from Mycobacterium ulcerans (strain Agy99).